We begin with the raw amino-acid sequence, 142 residues long: Negative cofactor 2 complex subunit alpha (142 aa).

Residues 1–11 (MADQVPVTTQL) are compositionally biased toward polar residues. The interval 1–43 (MADQVPVTTQLPPIKPEHEVPLDAGGSPVGNMGTNSNNNNELG) is disordered. Ser27 carries the post-translational modification Phosphoserine. A Histone-fold domain is found at 29–137 (VGNMGTNSNN…LCVEEGQTQP (109 aa)). Residue Ser141 is modified to Phosphoserine.

This sequence belongs to the NC2 alpha/DRAP1 family. In terms of assembly, component of the NC2 (negative cofactor 2) complex composed of BUR6 and NCB2. The NC2 complex associates with SPT15/TBP. Interacts with SPT15/TBP.

Its subcellular location is the nucleus. Functionally, component of the NC2 complex which represses RNA polymerase II transcription through binding to SPT15/TBP and thereby inhibiting the assembly of the preinitiation complex. The NC2 complex may also mediate transcriptional activation from TATA-driven promoters through association with SPT15/TBP. The sequence is that of Negative cofactor 2 complex subunit alpha (BUR6) from Saccharomyces cerevisiae (strain ATCC 204508 / S288c) (Baker's yeast).